The sequence spans 124 residues: Ribonuclease pancreatic (124 aa).

Substrate-binding residues include K7 and R10. Catalysis depends on H12, which acts as the Proton acceptor. Cystine bridges form between C26–C84, C40–C95, C58–C110, and C65–C72. The N-linked (GlcNAc...) asparagine glycan is linked to N34. Residues 41–45, K66, and R85 each bind substrate; that span reads KPVNT. H119 acts as the Proton donor in catalysis.

Belongs to the pancreatic ribonuclease family. In terms of assembly, monomer. Interacts with and forms tight 1:1 complexes with RNH1. Dimerization of two such complexes may occur. Interaction with RNH1 inhibits this protein. Pancreas.

It is found in the secreted. It carries out the reaction an [RNA] containing cytidine + H2O = an [RNA]-3'-cytidine-3'-phosphate + a 5'-hydroxy-ribonucleotide-3'-[RNA].. The catalysed reaction is an [RNA] containing uridine + H2O = an [RNA]-3'-uridine-3'-phosphate + a 5'-hydroxy-ribonucleotide-3'-[RNA].. In terms of biological role, endonuclease that catalyzes the cleavage of RNA on the 3' side of pyrimidine nucleotides. Acts on single-stranded and double-stranded RNA. The sequence is that of Ribonuclease pancreatic (RNASE1) from Mesocricetus auratus (Golden hamster).